Here is a 286-residue protein sequence, read N- to C-terminus: Translocon-associated protein subunit alpha (286 aa).

The first 20 residues, 1 to 20 (MSSLRRLLLLLLLVFPATLL), serve as a signal peptide directing secretion. The Lumenal segment spans residues 21–207 (LRVGPGGSLA…EREDGLDGET (187 aa)). Residues 37–75 (EDEETVEDSIIEDEDDEAEVEEDEPTDLAEDKEEDDVSG) are compositionally biased toward acidic residues. A disordered region spans residues 37–83 (EDEETVEDSIIEDEDDEAEVEEDEPTDLAEDKEEDDVSGEPEASPSA). N-linked (GlcNAc...) asparagine glycosylation is found at N136 and N191. The chain crosses the membrane as a helical span at residues 208 to 228 (IFMYMFLAGLGLLVVVGLHQL). Residues 229–286 (LESRKRKRPIQKVEMGTSSQNDVDMSWIPQETLNQINKASPRRLPRKRAQKRSVGSDE) lie on the Cytoplasmic side of the membrane. S247 is subject to Phosphoserine. T260 carries the post-translational modification Phosphothreonine. Residues 261-286 (LNQINKASPRRLPRKRAQKRSVGSDE) form a disordered region. S268 carries the post-translational modification Phosphoserine. Residues 268-279 (SPRRLPRKRAQK) show a composition bias toward basic residues.

Belongs to the TRAP-alpha family. Heterotetramer of TRAP-alpha, TRAP-beta, TRAP-delta and TRAP-gamma. Interacts with palmitoylated calnexin (CALX), the interaction is required for efficient folding of glycosylated proteins. Phosphorylated in its cytoplasmic tail.

It is found in the endoplasmic reticulum membrane. TRAP proteins are part of a complex whose function is to bind calcium to the ER membrane and thereby regulate the retention of ER resident proteins. May be involved in the recycling of the translocation apparatus after completion of the translocation process or may function as a membrane-bound chaperone facilitating folding of translocated proteins. The sequence is that of Translocon-associated protein subunit alpha (SSR1) from Bos taurus (Bovine).